Consider the following 247-residue polypeptide: Auxin-responsive protein IAA13 (247 aa).

The EAR-like (transcriptional repression) signature appears at 14-18; sequence LELGL. Gly residues predominate over residues 25-40; that stretch reads GTAAKIGKSGGGGAWG. Disordered regions lie at residues 25-44 and 49-119; these read GTAAKIGKSGGGGAWGERGR and KDFP…PKDV. Over residues 62–75 the composition is skewed to low complexity; that stretch reads SASHAGSSPPRSSS. Residues 87-98 show a composition bias toward polar residues; it reads RMNSLVNNQATK. The segment covering 106 to 119 has biased composition (basic and acidic residues); it reads AGKKKVKDDEPKDV. In terms of domain architecture, PB1 spans 129-225; it reads VGFIKVNMDG…SVKRLRVMKT (97 aa).

The protein belongs to the Aux/IAA family. In terms of assembly, homodimers and heterodimers. Interacts with TPL. As to expression, preferentially expressed in stems.

The protein localises to the nucleus. Functionally, aux/IAA proteins are short-lived transcriptional factors that function as repressors of early auxin response genes at low auxin concentrations. Repression is thought to result from the interaction with auxin response factors (ARFs), proteins that bind to the auxin-responsive promoter element (AuxRE). Formation of heterodimers with ARF proteins may alter their ability to modulate early auxin response genes expression. This Arabidopsis thaliana (Mouse-ear cress) protein is Auxin-responsive protein IAA13 (IAA13).